The sequence spans 320 residues: Nucleotide-binding protein Pcryo_0127 (320 aa).

32–39 (GRSGSGKT) contacts ATP. A GTP-binding site is contributed by 82–85 (DIRT).

This sequence belongs to the RapZ-like family.

Displays ATPase and GTPase activities. The polypeptide is Nucleotide-binding protein Pcryo_0127 (Psychrobacter cryohalolentis (strain ATCC BAA-1226 / DSM 17306 / VKM B-2378 / K5)).